The chain runs to 319 residues: Acetyl esterase (319 aa).

An Involved in the stabilization of the negatively charged intermediate by the formation of the oxyanion hole motif is present at residues His91–Gly93. Residues Ser165, Asp262, and His292 contribute to the active site.

Belongs to the 'GDXG' lipolytic enzyme family. In terms of assembly, homodimer. Interacts with MalT and MelA.

The protein localises to the cytoplasm. Displays esterase activity towards short chain fatty esters (acyl chain length of up to 8 carbons). Able to hydrolyze triacetylglycerol (triacetin) and tributyrylglycerol (tributyrin), but not trioleylglycerol (triolein) or cholesterol oleate. Negatively regulates MalT activity by antagonizing maltotriose binding. Inhibits MelA galactosidase activity. The protein is Acetyl esterase of Escherichia coli (strain 55989 / EAEC).